A 714-amino-acid polypeptide reads, in one-letter code: EtfAB:quinone oxidoreductase (714 aa).

6 helical membrane-spanning segments follow: residues 25–45 (YEWLIYVIMLIPVSVFLFGFW), 87–107 (AGWMHAFLFWGFLVLFLAAGI), 125–145 (IGFSWVVDVLGFLALIGVMVL), 164–184 (DGWIILLIFAILLTGYFIEGL), 207–227 (PFGWMFASFFGSMSVDAMLMW), and 236–256 (MAIAFLFIALVPFTKLWHIFA). 4Fe-4S ferredoxin-type domains lie at 293–324 (WKDLLDLDSCIRCGRCQENCPAYNTGKHLNPK) and 375–405 (YDVVGSETIWDCTNCRACMEHCPMFIEHIPK). 8 residues coordinate [4Fe-4S] cluster: C302, C305, C308, C312, C386, C389, C392, and C396.

In terms of assembly, might constitute a membrane-associated complex with EtfA (Swol_0697), EtfB (Swol_0696), and the butyryl-CoA dehydrogenase Swol_1933 and/or Swol_2052. [4Fe-4S] cluster is required as a cofactor.

The protein resides in the cell membrane. It functions in the pathway lipid metabolism; butanoate metabolism. Functionally, oxidoreductase involved in syntrophic growth of S.wolfei with butyrate. Is presumed to link the electron flow from butyryl-CoA dehydrogenases to the membrane, in conjunction with the electron transfer flavoprotein EtfAB. May transfer electrons to the menaquinone pool of the membrane. This chain is EtfAB:quinone oxidoreductase, found in Syntrophomonas wolfei subsp. wolfei (strain DSM 2245B / Goettingen).